A 419-amino-acid polypeptide reads, in one-letter code: UDP-arabinose 4-epimerase 1 (419 aa).

Positions 1-21 are disordered; that stretch reads MFSFGRARSQGRQNRSMSLGG. The Cytoplasmic portion of the chain corresponds to 1–32; that stretch reads MFSFGRARSQGRQNRSMSLGGLDYADPKKKNN. A helical; Signal-anchor for type II membrane protein membrane pass occupies residues 33-51; that stretch reads YLGKILLTASLTALCIFML. Over 52-419 the chain is Lumenal; it reads KQSPTFNTPS…GLTTSSVSVY (368 aa). Position 72–103 (72–103) interacts with NAD(+); that stretch reads HVLVTGGAGYIGSHAALRLLKESYRVTIVDNL. Tyrosine 220 serves as the catalytic Proton acceptor.

Belongs to the NAD(P)-dependent epimerase/dehydratase family. NAD(+) is required as a cofactor. As to expression, high expression in roots. Also found in leaves, stems, flowers, and siliques.

It localises to the golgi apparatus. Its subcellular location is the golgi stack membrane. The enzyme catalyses UDP-beta-L-arabinopyranose = UDP-alpha-D-xylose. It participates in nucleotide-sugar biosynthesis; UDP-L-arabinose biosynthesis; UDP-L-arabinose from UDP-alpha-D-xylose: step 1/1. The protein operates within cell wall biogenesis; cell wall polysaccharide biosynthesis. Acts as a UDP-D-xylose 4-epimerase but lacks both UDP-D-glucose and UDP-D-glucuronic acid 4-epimerase activities in vitro. The polypeptide is UDP-arabinose 4-epimerase 1 (Arabidopsis thaliana (Mouse-ear cress)).